The primary structure comprises 118 residues: Small ribosomal subunit protein uS13 (118 aa).

Residues 94-118 (GLPLRGQRTKTNARTRKGPRKPIRK) are disordered.

Belongs to the universal ribosomal protein uS13 family. In terms of assembly, part of the 30S ribosomal subunit. Forms a loose heterodimer with protein S19. Forms two bridges to the 50S subunit in the 70S ribosome.

In terms of biological role, located at the top of the head of the 30S subunit, it contacts several helices of the 16S rRNA. In the 70S ribosome it contacts the 23S rRNA (bridge B1a) and protein L5 of the 50S subunit (bridge B1b), connecting the 2 subunits; these bridges are implicated in subunit movement. Contacts the tRNAs in the A and P-sites. The protein is Small ribosomal subunit protein uS13 of Chromohalobacter salexigens (strain ATCC BAA-138 / DSM 3043 / CIP 106854 / NCIMB 13768 / 1H11).